The chain runs to 40 residues: Plasma membrane ATPase proteolipid 1 (40 aa).

A propeptide spanning residues 1 to 2 is cleaved from the precursor; that stretch reads MT. A helical membrane pass occupies residues 3–26; it reads LPGGVILVFILVGLACIAIIATII. Topologically, residues 27-40 are cytoplasmic; it reads YRKWQARQRGLQRF.

Monomer and homodimer. Associated with the 100 kDa subunit of the plasma membrane H(+)-ATPase.

Its subcellular location is the cell membrane. The polypeptide is Plasma membrane ATPase proteolipid 1 (PMP1) (Saccharomyces cerevisiae (strain ATCC 204508 / S288c) (Baker's yeast)).